The sequence spans 306 residues: tRNA dimethylallyltransferase (306 aa).

14–21 is a binding site for ATP; the sequence is GPTAAGKS. 16–21 is a substrate binding site; that stretch reads TAAGKS. Positions 39-42 are interaction with substrate tRNA; sequence DSRL.

The protein belongs to the IPP transferase family. Monomer. It depends on Mg(2+) as a cofactor.

It carries out the reaction adenosine(37) in tRNA + dimethylallyl diphosphate = N(6)-dimethylallyladenosine(37) in tRNA + diphosphate. Its function is as follows. Catalyzes the transfer of a dimethylallyl group onto the adenine at position 37 in tRNAs that read codons beginning with uridine, leading to the formation of N6-(dimethylallyl)adenosine (i(6)A). The polypeptide is tRNA dimethylallyltransferase (Synechococcus elongatus (strain ATCC 33912 / PCC 7942 / FACHB-805) (Anacystis nidulans R2)).